The following is a 148-amino-acid chain: UPF0260 protein Spro_2751 (148 aa).

The protein belongs to the UPF0260 family.

This Serratia proteamaculans (strain 568) protein is UPF0260 protein Spro_2751.